We begin with the raw amino-acid sequence, 109 residues long: Phosphoribosyl-ATP pyrophosphatase (109 aa).

The protein belongs to the PRA-PH family.

The protein localises to the cytoplasm. The enzyme catalyses 1-(5-phospho-beta-D-ribosyl)-ATP + H2O = 1-(5-phospho-beta-D-ribosyl)-5'-AMP + diphosphate + H(+). It functions in the pathway amino-acid biosynthesis; L-histidine biosynthesis; L-histidine from 5-phospho-alpha-D-ribose 1-diphosphate: step 2/9. The chain is Phosphoribosyl-ATP pyrophosphatase from Alkalilimnicola ehrlichii (strain ATCC BAA-1101 / DSM 17681 / MLHE-1).